The chain runs to 526 residues: ATP synthase subunit alpha (526 aa).

171-178 (GDRQTGKT) provides a ligand contact to ATP.

Belongs to the ATPase alpha/beta chains family. F-type ATPases have 2 components, CF(1) - the catalytic core - and CF(0) - the membrane proton channel. CF(1) has five subunits: alpha(3), beta(3), gamma(1), delta(1), epsilon(1). CF(0) has four main subunits: a(1), b(1), b'(1) and c(9-12).

It is found in the cell inner membrane. It carries out the reaction ATP + H2O + 4 H(+)(in) = ADP + phosphate + 5 H(+)(out). In terms of biological role, produces ATP from ADP in the presence of a proton gradient across the membrane. The alpha chain is a regulatory subunit. This is ATP synthase subunit alpha from Chlorobaculum tepidum (strain ATCC 49652 / DSM 12025 / NBRC 103806 / TLS) (Chlorobium tepidum).